A 367-amino-acid polypeptide reads, in one-letter code: uncharacterized protein (367 aa).

A run of 4 helical transmembrane segments spans residues 35-55, 61-81, 92-112, and 113-133; these read YVYD…IILW, LALF…TLLV, EVAD…TAAG, and LMFS…PLFL. 3 disordered regions span residues 177 to 220, 249 to 283, and 296 to 367; these read KLPK…PASI, SNIK…YYTP, and GDIS…SRPK. Residues 257–274 are compositionally biased toward polar residues; it reads NTKSILHTPLNRRSPSGS. Over residues 302-312 the composition is skewed to low complexity; that stretch reads SSSSTSSKTST. Over residues 323-342 the composition is skewed to basic and acidic residues; sequence SRSERNARHHRNKEDHRQNQ. Basic residues predominate over residues 357 to 367; sequence PRRKKYRSRPK.

This sequence belongs to the chlamydial CPn_0443/CT_005/TC_0273 family.

It is found in the cell membrane. This is an uncharacterized protein from Chlamydia muridarum (strain MoPn / Nigg).